We begin with the raw amino-acid sequence, 111 residues long: Fluoride-specific ion channel FluC (111 aa).

3 helical membrane passes run 2 to 22, 36 to 56, and 71 to 91; these read GLLL…RFAL, GILL…AFLI, and FLLV…SLDI. Residues glycine 79 and threonine 82 each contribute to the Na(+) site.

The protein belongs to the fluoride channel Fluc/FEX (TC 1.A.43) family.

The protein localises to the cell inner membrane. It carries out the reaction fluoride(in) = fluoride(out). With respect to regulation, na(+) is not transported, but it plays an essential structural role and its presence is essential for fluoride channel function. Its function is as follows. Fluoride-specific ion channel. Important for reducing fluoride concentration in the cell, thus reducing its toxicity. The chain is Fluoride-specific ion channel FluC from Francisella tularensis subsp. holarctica (strain FTNF002-00 / FTA).